The chain runs to 129 residues: Replication initiation control protein YabA (129 aa).

The Zn(2+) site is built by His-103, Cys-105, Cys-119, and Cys-122.

It belongs to the YabA family. Homotetramer. Interacts with both DnaA and DnaN, acting as a bridge between these two proteins. Zn(2+) is required as a cofactor.

It localises to the cytoplasm. Its subcellular location is the nucleoid. Involved in control of chromosome replication initiation. Inhibits the cooperative binding of DnaA to the oriC region, thus negatively regulating initiation of chromosome replication. Inhibits the ability of DnaA-ATP to form a helix on DNA; does not disassemble preformed DnaA-DNA helices. Decreases the residence time of DnaA on the chromosome at its binding sites (oriC, replication forks and promoter-binding sites). Tethers DnaA to the replication machinery via the DNA polymerase beta sliding clamp subunit (dnaN). Associates with oriC and other DnaA targets on the chromosome in a DnaA-dependent manner. The chain is Replication initiation control protein YabA from Listeria monocytogenes serotype 4b (strain CLIP80459).